We begin with the raw amino-acid sequence, 450 residues long: Exodeoxyribonuclease 7 large subunit (450 aa).

Belongs to the XseA family. As to quaternary structure, heterooligomer composed of large and small subunits.

It is found in the cytoplasm. It carries out the reaction Exonucleolytic cleavage in either 5'- to 3'- or 3'- to 5'-direction to yield nucleoside 5'-phosphates.. Bidirectionally degrades single-stranded DNA into large acid-insoluble oligonucleotides, which are then degraded further into small acid-soluble oligonucleotides. In Listeria monocytogenes serovar 1/2a (strain ATCC BAA-679 / EGD-e), this protein is Exodeoxyribonuclease 7 large subunit.